Consider the following 328-residue polypeptide: Probable cytosolic iron-sulfur protein assembly protein 1 (328 aa).

WD repeat units lie at residues 12-49, 54-93, 102-141, 148-187, 192-233, 246-284, and 291-328; these read LHGD…LVEE, AHKK…YSGE, GHEN…EEFE, EHSQ…WECA, GHGG…ADVF, VHTR…RWEV, and AHTV…LREE.

The protein belongs to the WD repeat CIA1 family. In terms of assembly, interacts with NAR1.

It is found in the cytoplasm. The protein localises to the nucleus. Functionally, essential component of the cytosolic iron-sulfur (Fe/S) protein assembly machinery. Required for the maturation of extramitochondrial Fe/S proteins. This is Probable cytosolic iron-sulfur protein assembly protein 1 from Eremothecium gossypii (strain ATCC 10895 / CBS 109.51 / FGSC 9923 / NRRL Y-1056) (Yeast).